The following is a 1790-amino-acid chain: Intracellular protein transport protein USO1 (1790 aa).

Positions 1 to 724 (MDIIQGLIQQ…LSHDPDEEPI (724 aa)) are globular head. 10 ARM repeats span residues 45–89 (AFSR…LFIR), 127–170 (QFSL…AVMA), 173–213 (PLKA…MAVV), 215–260 (DSPH…NILK), 261–312 (YNTS…VSLT), 314–362 (EPGN…NMVR), 363–429 (SNEH…LKAY), 431–512 (MDNF…PFKL), 543–584 (GNDL…LIYW), and 586–630 (FGDF…LGVA). Residues 452–484 (TNNVGDNAKENGGSNKSDKESDSDKDTDGKDGT) form a disordered region. The tract at residues 465–487 (SNKSDKESDSDKDTDGKDGTEYE) is charged (hyper-hydrophilic). Positions 467 to 484 (KSDKESDSDKDTDGKDGT) are enriched in basic and acidic residues. Positions 725–1790 (NKISFEEVEK…EEDEEEGQVA (1066 aa)) form a coiled coil. The segment at 991 to 1790 (ESSIQLSNLQ…EEDEEEGQVA (800 aa)) is dispensable for the protein function. Disordered regions lie at residues 1185–1221 (EITSTQQENESIKKKNDELEGEVKAMKSTSEEQSNLK), 1326–1351 (KEKSESELSRLKKTSSEERKNAEEQL), 1485–1547 (GLKK…EDIK), 1645–1667 (QELDSTQQKAQKSEEERRAEVRK), 1722–1742 (DNLKAENSKLKEANEDRSEID), and 1762–1790 (LKDLGVEISSDEEDDEEDDEEDEEEGQVA). Residues 1194 to 1209 (ESIKKKNDELEGEVKA) are compositionally biased toward basic and acidic residues. 4 stretches are compositionally biased toward basic and acidic residues: residues 1485-1512 (GLKKLEEESSKEKAELEKSKEMMKKLES), 1519-1547 (TELKSSMETIRKSDEKLEQSKKSAEEDIK), 1655-1667 (QKSEEERRAEVRK), and 1722-1738 (DNLKAENSKLKEANEDR). The residue at position 1770 (Ser-1770) is a Phosphoserine. Over residues 1770–1790 (SSDEEDDEEDDEEDEEEGQVA) the composition is skewed to acidic residues.

It belongs to the VDP/USO1/EDE1 family. As to quaternary structure, homodimer. Dimerizes by parallel association of the tails, resulting in an elongated structure with two globular head domains side by side, and a long rod-like tail structure.

It localises to the cytoplasm. The protein localises to the cytoskeleton. The protein resides in the cytoplasmic vesicle membrane. Its subcellular location is the endoplasmic reticulum membrane. It is found in the golgi apparatus membrane. In terms of biological role, required for protein transport from the ER to the Golgi complex. This is Intracellular protein transport protein USO1 (USO1) from Saccharomyces cerevisiae (strain ATCC 204508 / S288c) (Baker's yeast).